The following is a 189-amino-acid chain: uncharacterized protein (189 aa).

This is an uncharacterized protein from Saccharomyces cerevisiae (strain ATCC 204508 / S288c) (Baker's yeast).